A 185-amino-acid polypeptide reads, in one-letter code: Ribosome maturation factor RimM (185 aa).

Residues 108-183 (PGEFHVTDLL…RLEIKTIPGL (76 aa)) enclose the PRC barrel domain.

This sequence belongs to the RimM family. Binds ribosomal protein uS19.

The protein resides in the cytoplasm. Its function is as follows. An accessory protein needed during the final step in the assembly of 30S ribosomal subunit, possibly for assembly of the head region. Essential for efficient processing of 16S rRNA. May be needed both before and after RbfA during the maturation of 16S rRNA. It has affinity for free ribosomal 30S subunits but not for 70S ribosomes. The sequence is that of Ribosome maturation factor RimM from Synechocystis sp. (strain ATCC 27184 / PCC 6803 / Kazusa).